The primary structure comprises 350 residues: MENNILELRNVTKDYDGKVVLKGIDLNIKEGEFITLLGPSGCGKTTTLRIVAGFEKPNSGQIMFEGKDLLPIPINKRQFNTIFQSYALFPHLNVFDNIAFGLRTKKTKKDILQREVLKQIRQVGLEGFEDRNINDLSGGQKQRVAIARALVMKPKVLLLDEPLAALDVQLRQHMREELKRLQREIGITFLMVSHDQEEALSISDRVVVMNEGSIQQIGTPEDIYNEPENLWVAKFIGQSNIIEDGIFIEDNKVQIDGKTFVCDDTNFGENEKSIDIVIRPEDIEIKKTNAGFFNGTVMHTTFKGVHWELLVETTKKRIWKIHTTQAFKVDDKVSIKWNDEAIHVMWKEVE.

The region spanning 6-236 is the ABC transporter domain; it reads LELRNVTKDY…PENLWVAKFI (231 aa). Position 38–45 (38–45) interacts with ATP; the sequence is GPSGCGKT.

It belongs to the ABC transporter superfamily. Spermidine/putrescine importer (TC 3.A.1.11.1) family. In terms of assembly, the complex is composed of two ATP-binding proteins (PotA), two transmembrane proteins (PotB and PotC) and a solute-binding protein (PotD).

The protein resides in the cell membrane. The enzyme catalyses ATP + H2O + polyamine-[polyamine-binding protein]Side 1 = ADP + phosphate + polyamineSide 2 + [polyamine-binding protein]Side 1.. In terms of biological role, part of the ABC transporter complex PotABCD involved in spermidine/putrescine import. Responsible for energy coupling to the transport system. The polypeptide is Spermidine/putrescine import ATP-binding protein PotA (Mesoplasma florum (strain ATCC 33453 / NBRC 100688 / NCTC 11704 / L1) (Acholeplasma florum)).